We begin with the raw amino-acid sequence, 235 residues long: Thiamine import ATP-binding protein ThiQ (235 aa).

Residues 2-230 (LKLENLTYRY…TVPEAAILGM (229 aa)) enclose the ABC transporter domain. 32–39 (GPSGAGKS) provides a ligand contact to ATP.

Belongs to the ABC transporter superfamily. Thiamine importer (TC 3.A.1.19.1) family. The complex is composed of two ATP-binding proteins (ThiQ), two transmembrane proteins (ThiP) and a solute-binding protein (ThiB).

Its subcellular location is the cell inner membrane. The enzyme catalyses thiamine(out) + ATP + H2O = thiamine(in) + ADP + phosphate + H(+). In terms of biological role, part of the ABC transporter complex ThiBPQ involved in thiamine import. Responsible for energy coupling to the transport system. The sequence is that of Thiamine import ATP-binding protein ThiQ from Photorhabdus laumondii subsp. laumondii (strain DSM 15139 / CIP 105565 / TT01) (Photorhabdus luminescens subsp. laumondii).